A 316-amino-acid polypeptide reads, in one-letter code: Lipooligosaccharide heptosyltransferase 2 (316 aa).

The protein belongs to the glycosyltransferase 9 family.

The enzyme catalyses an L-alpha-D-Hep-(1-&gt;5)-[alpha-Kdo-(2-&gt;4)]-alpha-Kdo-(2-&gt;6)-lipid A + ADP-L-glycero-beta-D-manno-heptose = an L-alpha-D-Hep-(1-&gt;3)-L-alpha-D-Hep-(1-&gt;5)-[alpha-Kdo-(2-&gt;4)]-alpha-Kdo-(2-&gt;6)-lipid A + ADP + H(+). It functions in the pathway bacterial outer membrane biogenesis; LOS core biosynthesis. Its function is as follows. Glycosyltransferase involved in the biosynthesis of the core oligosaccharide region of lipooligosaccharide (LOS). Catalyzes the addition of the second heptose unit to the heptosyl-Kdo2-lipid A module. The sequence is that of Lipooligosaccharide heptosyltransferase 2 from Campylobacter jejuni subsp. jejuni serotype O:6 (strain 81116 / NCTC 11828).